The following is a 269-amino-acid chain: Eukaryotic translation initiation factor 3 subunit G-1 (269 aa).

The RRM domain occupies A188 to P266.

It belongs to the eIF-3 subunit G family. In terms of assembly, component of the eukaryotic translation initiation factor 3 (eIF-3) complex. The eIF-3 complex interacts with pix.

The protein resides in the cytoplasm. Its function is as follows. RNA-binding component of the eukaryotic translation initiation factor 3 (eIF-3) complex, which is involved in protein synthesis of a specialized repertoire of mRNAs and, together with other initiation factors, stimulates binding of mRNA and methionyl-tRNAi to the 40S ribosome. The eIF-3 complex specifically targets and initiates translation of a subset of mRNAs involved in cell proliferation. This subunit can bind 18S rRNA. The polypeptide is Eukaryotic translation initiation factor 3 subunit G-1 (Drosophila virilis (Fruit fly)).